Here is a 368-residue protein sequence, read N- to C-terminus: Propane 2-monooxygenase, hydroxylase component small subunit (368 aa).

It belongs to the TmoE/XamoE family. The propane 2-monooxygenase multicomponent enzyme system is composed of an electron transfer component and a monooxygenase component interacting with the effector protein MimD. The electron transfer component is composed of a reductase (MimB), and the monooxygenase component is formed by a large subunit (MimA) and a small subunit (MimC). Requires the presence of the chaperonin-like protein MimG to ensure a productive folding, resulting of a soluble MimC, which leads to the active form of MimABCD.

The catalysed reaction is propane + NADH + O2 + H(+) = propan-2-ol + NAD(+) + H2O. It catalyses the reaction acetone + NADH + O2 + H(+) = hydroxyacetone + NAD(+) + H2O. The enzyme catalyses butan-2-one + NADH + O2 + H(+) = 1-hydroxy-2-butanone + NAD(+) + H2O. It carries out the reaction phenol + NADH + O2 + H(+) = hydroquinone + NAD(+) + H2O. Its function is as follows. Component of the propane 2-monooxygenase multicomponent enzyme system which is involved in the degradation of propane via the O2-dependent hydroxylation of propane. Also involved in the degradation of acetone via the O2-dependent hydroxylation of acetone. Also able to catalyze the oxidation of phenol, methylethylketone (2-butanone), 1-propanol and 2-propanol. This chain is Propane 2-monooxygenase, hydroxylase component small subunit, found in Mycolicibacterium goodii (Mycobacterium goodii).